A 73-amino-acid chain; its full sequence is Translational regulator CsrA (73 aa).

It belongs to the CsrA/RsmA family. As to quaternary structure, homodimer; the beta-strands of each monomer intercalate to form a hydrophobic core, while the alpha-helices form wings that extend away from the core.

It localises to the cytoplasm. Functionally, a translational regulator that binds mRNA to regulate translation initiation and/or mRNA stability. Usually binds in the 5'-UTR at or near the Shine-Dalgarno sequence preventing ribosome-binding, thus repressing translation. Its main target seems to be the major flagellin gene, while its function is anatagonized by FliW. The protein is Translational regulator CsrA of Lachnospira eligens (strain ATCC 27750 / DSM 3376 / VPI C15-48 / C15-B4) (Eubacterium eligens).